A 505-amino-acid chain; its full sequence is Maturase K (505 aa).

This sequence belongs to the intron maturase 2 family. MatK subfamily.

The protein resides in the plastid. It localises to the chloroplast. Functionally, usually encoded in the trnK tRNA gene intron. Probably assists in splicing its own and other chloroplast group II introns. This chain is Maturase K, found in Portulacaria afra (Elephant's food).